A 177-amino-acid chain; its full sequence is Parathyroid hormone-related protein (177 aa).

An N-terminal signal peptide occupies residues 1-24 (MQRRLVQQWSVAVFLLSYAVPSCG). A propeptide spanning residues 25 to 34 (RSVEGLSRRL) is cleaved from the precursor. The interval 57 to 68 (RFFLHHLIAEIH) is important for receptor binding. The tract at residues 74–177 (ATSEVSPNSK…TSLELDSRRH (104 aa)) is disordered. Positions 76 to 90 (SEVSPNSKPSPNTKN) are enriched in polar residues. The Nuclear localization signal signature appears at 108–129 (TNKVETYKEQPLKTPGKKKKGK). Residues 109–118 (NKVETYKEQP) show a composition bias toward basic and acidic residues. Positions 122-132 (PGKKKKGKPGK) are enriched in basic residues.

This sequence belongs to the parathyroid hormone family. In terms of assembly, interacts with PTH1R (via N-terminal extracellular domain). There are 3 principal secretory forms, called PTHrP[1-36], PTHrP[38-94], and osteostatin (PTHrP[107-139]) arising from endoproteolytic cleavage of the initial translation product. Each of these secretory forms is believed to have one or more of its own receptors that mediates the normal paracrine, autocrine and endocrine actions. Ubiquitous. Also expressed in the mammary gland.

The protein localises to the secreted. It localises to the cytoplasm. Its subcellular location is the nucleus. Functionally, neuroendocrine peptide which is a critical regulator of cellular and organ growth, development, migration, differentiation and survival and of epithelial calcium ion transport. Acts by binding to its receptor, PTH1R, activating G protein-coupled receptor signaling. Regulates endochondral bone development and epithelial-mesenchymal interactions during the formation of the mammary glands and teeth. Required for skeletal homeostasis. Promotes mammary mesenchyme differentiation and bud outgrowth by modulating mesenchymal cell responsiveness to BMPs. Up-regulates BMPR1A expression in the mammary mesenchyme and this increases the sensitivity of these cells to BMPs and allows them to respond to BMP4 in a paracrine and/or autocrine fashion. BMP4 signaling in the mesenchyme, in turn, triggers epithelial outgrowth and augments MSX2 expression, which causes the mammary mesenchyme to inhibit hair follicle formation within the nipple sheath. Promotes colon cancer cell migration and invasion in an integrin alpha-6/beta-1-dependent manner through activation of Rac1. Potent inhibitor of osteoclastic bone resorption. This chain is Parathyroid hormone-related protein, found in Homo sapiens (Human).